Here is a 248-residue protein sequence, read N- to C-terminus: UDP-2,3-diacylglucosamine hydrolase (248 aa).

Mn(2+) is bound by residues aspartate 7, histidine 9, aspartate 40, asparagine 78, and histidine 113. 78 to 79 (NR) lines the substrate pocket. 5 residues coordinate substrate: aspartate 121, serine 159, threonine 163, lysine 166, and histidine 194. The Mn(2+) site is built by histidine 194 and histidine 196.

This sequence belongs to the LpxH family. Mn(2+) is required as a cofactor.

It is found in the cell inner membrane. It carries out the reaction UDP-2-N,3-O-bis[(3R)-3-hydroxytetradecanoyl]-alpha-D-glucosamine + H2O = 2-N,3-O-bis[(3R)-3-hydroxytetradecanoyl]-alpha-D-glucosaminyl 1-phosphate + UMP + 2 H(+). It functions in the pathway glycolipid biosynthesis; lipid IV(A) biosynthesis; lipid IV(A) from (3R)-3-hydroxytetradecanoyl-[acyl-carrier-protein] and UDP-N-acetyl-alpha-D-glucosamine: step 4/6. Functionally, hydrolyzes the pyrophosphate bond of UDP-2,3-diacylglucosamine to yield 2,3-diacylglucosamine 1-phosphate (lipid X) and UMP by catalyzing the attack of water at the alpha-P atom. Involved in the biosynthesis of lipid A, a phosphorylated glycolipid that anchors the lipopolysaccharide to the outer membrane of the cell. This Pseudomonas savastanoi pv. phaseolicola (strain 1448A / Race 6) (Pseudomonas syringae pv. phaseolicola (strain 1448A / Race 6)) protein is UDP-2,3-diacylglucosamine hydrolase.